Reading from the N-terminus, the 367-residue chain is MYYSIIISLIEVVLVLVPALLGIAYVTIAERKTMASMQRRLGPNFVGYYGLLQAFADALKLLLKEYVAPTQANIILFFLGPVITLIFSLLGYAVIPYGPSLAINDFSLGIYYILAVSSLATYGILLAGWSANSKYAFLGSLRSTAQLISYELVLSSAILLVIMLTGSLNLSVNIESQRAIWNIFPLLPVFIIFFIGSVAETNRAPFDLAEAESELVSGFMTEHAAVVFVFFFLAEYGSIVLMCILTSILFLGGYLSINSLDVFNFFYSILFNIGFIDLNFFNIFYYFYKEIFVNNSIIEGLIYGLTIGLKSSILIFLFIWVRASFPRIRFDQLMAFCWTVLLPLLFALIVLLPCILYSYNILPVNVL.

Transmembrane regions (helical) follow at residues 5 to 25 (IIIS…GIAY), 43 to 63 (PNFV…KLLL), 74 to 94 (IILF…GYAV), 108 to 128 (LGIY…LLAG), 152 to 172 (LVLS…NLSV), 179 to 199 (AIWN…GSVA), 225 to 245 (AVVF…MCIL), 265 to 285 (FFYS…NIFY), 301 to 321 (LIYG…FIWV), and 336 to 356 (FCWT…PCIL).

The protein belongs to the complex I subunit 1 family.

The protein resides in the mitochondrion inner membrane. It carries out the reaction a ubiquinone + NADH + 5 H(+)(in) = a ubiquinol + NAD(+) + 4 H(+)(out). Its function is as follows. Core subunit of the mitochondrial membrane respiratory chain NADH dehydrogenase (Complex I) that is believed to belong to the minimal assembly required for catalysis. Complex I functions in the transfer of electrons from NADH to the respiratory chain. The immediate electron acceptor for the enzyme is believed to be ubiquinone. In Podospora anserina (strain S / ATCC MYA-4624 / DSM 980 / FGSC 10383) (Pleurage anserina), this protein is NADH-ubiquinone oxidoreductase chain 1 (ND1).